A 461-amino-acid chain; its full sequence is Propionyl-CoA carboxylase regulator (461 aa).

The region spanning 11–65 (LRELRVKLGLTQKVFAERLGASLPYLNQMENNHRPVSATVVLALAQEFGVDVTKL) is the HTH cro/C1-type domain. The segment at residues 22-41 (QKVFAERLGASLPYLNQMEN) is a DNA-binding region (H-T-H motif).

It belongs to the short-chain fatty acyl-CoA assimilation regulator (ScfR) family.

Its function is as follows. Transcriptional regulator that controls propionyl-CoA assimilation through the methylmalonyl-CoA pathway via regulation of pccB expression. This is Propionyl-CoA carboxylase regulator from Cereibacter sphaeroides (strain ATCC 17023 / DSM 158 / JCM 6121 / CCUG 31486 / LMG 2827 / NBRC 12203 / NCIMB 8253 / ATH 2.4.1.) (Rhodobacter sphaeroides).